Reading from the N-terminus, the 237-residue chain is Ras-related protein RABA3 (237 aa).

Position 35-42 (35-42 (GDSAVGKT)) interacts with GTP. The Effector region motif lies at 57–65 (SKSTIGVEF). GTP-binding positions include 83–87 (DTAGQ), 141–144 (NKAD), and 172–173 (SA). S-geranylgeranyl cysteine attachment occurs at residues Cys235 and Cys237. At Cys237 the chain carries Cysteine methyl ester.

This sequence belongs to the small GTPase superfamily. Rab family. Expressed in root tips.

The protein localises to the endosome membrane. Its subcellular location is the golgi apparatus. It is found in the trans-Golgi network membrane. In terms of biological role, intracellular vesicle trafficking and protein transport. The protein is Ras-related protein RABA3 (RABA3) of Arabidopsis thaliana (Mouse-ear cress).